The sequence spans 753 residues: RNA-directed RNA polymerase catalytic subunit (753 aa).

The segment at 52–82 (KGKWTTNTETGAPQLNPIDGPLPEDNEPSGY) is disordered. Residues 55 to 64 (WTTNTETGAP) show a composition bias toward polar residues. 2 short sequence motifs (nuclear localization signal) span residues 187-195 (RKRRVRDNM) and 203-216 (RTIG…NKKS). The segment at 249–256 (RGFVYFVE) is promoter-binding site. A RdRp catalytic domain is found at 286-483 (VRKMMTNSQD…GINMSKKKSY (198 aa)).

The protein belongs to the influenza viruses polymerase PB1 family. Influenza RNA polymerase is composed of three subunits: PB1, PB2 and PA. Interacts (via N-terminus) with PA (via C-terminus). Interacts (via C-terminus) with PB2 (via N-terminus); this interaction is essential for transcription initiation. Post-translationally, phosphorylated by host PRKCA.

The protein resides in the host nucleus. It localises to the host cytoplasm. The enzyme catalyses RNA(n) + a ribonucleoside 5'-triphosphate = RNA(n+1) + diphosphate. In terms of biological role, RNA-dependent RNA polymerase which is responsible for replication and transcription of virus RNA segments. The transcription of viral mRNAs occurs by a unique mechanism called cap-snatching. 5' methylated caps of cellular mRNAs are cleaved after 10-13 nucleotides by PA. In turn, these short capped RNAs are used as primers by PB1 for transcription of viral mRNAs. During virus replication, PB1 initiates RNA synthesis and copy vRNA into complementary RNA (cRNA) which in turn serves as a template for the production of more vRNAs. The sequence is that of RNA-directed RNA polymerase catalytic subunit from Influenza A virus (strain A/Chicken/Hong Kong/96.1/2002 H5N1 genotype Y).